The chain runs to 483 residues: Altronate oxidoreductase (483 aa).

18–29 (IIQFGEGNFLRA) contributes to the NAD(+) binding site.

Belongs to the mannitol dehydrogenase family. UxaB subfamily.

The catalysed reaction is D-altronate + NAD(+) = keto-D-tagaturonate + NADH + H(+). It functions in the pathway carbohydrate metabolism; pentose and glucuronate interconversion. In Shigella flexneri serotype 5b (strain 8401), this protein is Altronate oxidoreductase.